The primary structure comprises 59 residues: Conotoxin ViVB (59 aa).

The first 22 residues, 1 to 22 (MRCVPVFIILLLLIPSAPSAAV), serve as a signal peptide directing secretion. Residues 23–46 (QPKTEKDDVPLASFHDSAMRILSR) constitute a propeptide that is removed on maturation. At Gln-47 the chain carries Pyrrolidone carboxylic acid. A Valine amide modification is found at Val-58.

Post-translationally, contains 2 disulfide bonds that can be either 'C1-C3, C2-C4' or 'C1-C4, C2-C3', since these disulfide connectivities have been observed for conotoxins with cysteine framework V (for examples, see AC P0DQQ7 and AC P81755). As to expression, expressed by the venom duct.

The protein resides in the secreted. This is Conotoxin ViVB from Conus virgo (Virgin cone).